Here is a 329-residue protein sequence, read N- to C-terminus: MFVSVGITASLTTILAAPVLTWVWANHLEPNLLRVTRLNWNLPKKFAHLHGLRIVQISDLHLNHSTPDAFLKKVSRKISSLSPDILVFTGDFVCRAKVETPERLKHFLCSLHAPLGCFACLGNHDYATYVSRDIHGKINTISAMNSRPLKRAFTSVYQSLFASSRNEFADTLNPQIPNPHLVSILRNTPFQLLHNQSATLSDTINIVGLGDFFAKQFDPKKAFTDYNPTLPGIILSHNPDTIHHLQDYPGDVVFSGHSHGPQISLPWPKFANTITNKLSGLENPELARGLFSFPEESRLLYVNRGLGGWKRIRFCSPPEICLMRCLYEP.

Residues 2-24 form a helical membrane-spanning segment; it reads FVSVGITASLTTILAAPVLTWVW. Positions 59, 61, 91, 123, 257, and 259 each coordinate a divalent metal cation.

This sequence belongs to the metallophosphoesterase superfamily. LpxG family. Mn(2+) serves as cofactor.

The protein localises to the cell inner membrane. It carries out the reaction UDP-2,3-diacyl-alpha-D-glucosamine + H2O = 2,3-diacyl-alpha-D-glucosaminyl 1-phosphate + UMP + 2 H(+). It functions in the pathway glycolipid biosynthesis; lipid IV(A) biosynthesis. In terms of biological role, hydrolyzes the pyrophosphate bond of UDP-2,3-diacylglucosamine to form 2,3-diacylglucosamine 1-phosphate (lipid X) and UMP by catalyzing the attack of water at the alpha-P atom. Involved in the biosynthesis of lipid A, a phosphorylated glycolipid that anchors the lipooligosaccharide (LOS) to the outer membrane of the cell. Can functionally complement lpxH deficiency in E.coli. Overexpression of LpxG results in toxic accumulation of lipid X and profoundly reduces the infectivity of C.trachomatis. Can utilize UDP-2-N,3-O-bis((3R)-3-hydroxytetradecanoyl)-alpha-D-glucosamine as substrate in vitro, but the substrate is likely UDP-2-N-((3R)-3-hydroxyicosanoyl),3-O-(tetradecanoyl)-alpha-D-glucosamine in vivo. The chain is UDP-2,3-diacylglucosamine pyrophosphatase LpxG from Chlamydia trachomatis serovar D (strain ATCC VR-885 / DSM 19411 / UW-3/Cx).